The sequence spans 603 residues: UvrABC system protein C (603 aa).

In terms of domain architecture, GIY-YIG spans 17 to 94 (TTSGCYKMLN…IKTHKPDYNV (78 aa)). In terms of domain architecture, UVR spans 199 to 234 (SEILSQIDIKLKLAVQKEDFETAIKLKEMKSSLIEI).

Belongs to the UvrC family. As to quaternary structure, interacts with UvrB in an incision complex.

It localises to the cytoplasm. The UvrABC repair system catalyzes the recognition and processing of DNA lesions. UvrC both incises the 5' and 3' sides of the lesion. The N-terminal half is responsible for the 3' incision and the C-terminal half is responsible for the 5' incision. The chain is UvrABC system protein C from Borrelia garinii subsp. bavariensis (strain ATCC BAA-2496 / DSM 23469 / PBi) (Borreliella bavariensis).